The primary structure comprises 225 residues: PKHD-type hydroxylase YbiX (225 aa).

The Fe2OG dioxygenase domain maps to 78-177 (TLSTPLFNRY…RVASFMWIQS (100 aa)). Fe cation-binding residues include His-96, Asp-98, and His-158. Arg-168 is a 2-oxoglutarate binding site.

The cofactor is Fe(2+). It depends on L-ascorbate as a cofactor.

The sequence is that of PKHD-type hydroxylase YbiX from Escherichia coli O45:K1 (strain S88 / ExPEC).